Here is a 298-residue protein sequence, read N- to C-terminus: HTH-type transcriptional regulator TsaR (298 aa).

One can recognise an HTH lysR-type domain in the interval 1–58 (MKLQTLQALICIEEVGSLRAAAQLLHLSQPALSAAIQQLEDELKAPLLVRTKRGVSLT). Residues 18 to 37 (LRAAAQLLHLSQPALSAAIQ) constitute a DNA-binding region (H-T-H motif). Positions 98 and 100 each coordinate toluene-4-sulfonate.

This sequence belongs to the LysR transcriptional regulatory family. In terms of assembly, homotetramer. Dimer of dimers related by a twofold axis.

With respect to regulation, sensitive to oxygen. Its function is as follows. Regulates expression of the tsaMBCD1 operon and of tsaT in response to p-toluenesulfonate (TSA). Acts by binding directly to the promoter region. Binding to the tsa promoter depends on TSA concentration. This is HTH-type transcriptional regulator TsaR (tsaR) from Comamonas testosteroni (Pseudomonas testosteroni).